A 64-amino-acid chain; its full sequence is Large ribosomal subunit protein bL35 (64 aa).

Residues 1–29 form a disordered region; the sequence is MPKMKTHSGAKKRFKLTGSGKLRRQQANR.

This sequence belongs to the bacterial ribosomal protein bL35 family.

This is Large ribosomal subunit protein bL35 from Pseudarthrobacter chlorophenolicus (strain ATCC 700700 / DSM 12829 / CIP 107037 / JCM 12360 / KCTC 9906 / NCIMB 13794 / A6) (Arthrobacter chlorophenolicus).